The primary structure comprises 424 residues: Caspase-2 (424 aa).

Residues 1 to 140 constitute a propeptide that is removed on maturation; sequence MLGACGMQRY…IVEHSLDSGD (140 aa). The region spanning 7-96 is the CARD domain; the sequence is MQRYHQEALK…QHLAEMILKT (90 aa). Catalysis depends on residues H248 and C291. Positions 296-310 are enriched in basic and acidic residues; that stretch reads TDRGVDQRDGKERSD. The tract at residues 296–325 is disordered; the sequence is TDRGVDQRDGKERSDSPGCEESDANKEENL.

This sequence belongs to the peptidase C14A family. As to quaternary structure, heterotetramer that consists of two anti-parallel arranged heterodimers, each one formed by a p18 subunit and a p12 subunit.

It catalyses the reaction Strict requirement for an Asp residue at P1, with 316-Asp being essential for proteolytic activity and has a preferred cleavage sequence of Val-Asp-Val-Ala-Asp-|-.. Involved in the activation cascade of caspases responsible for apoptosis execution. Might function by either activating some proteins required for cell death or inactivating proteins necessary for cell survival. In Gallus gallus (Chicken), this protein is Caspase-2 (CASP2).